Consider the following 401-residue polypeptide: MDLTQQAKDIQNVTVEETNKNNSESIECSKITMDLKFNNSRKYISITVPSKTQTMSPHIKSIDDIVVLGMNLSKFNKLTQFFICVAGVFVFYLIYGYLQELIFSVEGFKSYGWYLTLVQFAFYSIFGLIELQPIQDKRRRIPGKTYMIIAFLTVGTMGLSNTSLGYLNYPTQVIFKCCKLIPVMLGGVFIQGKRYNVADVSAAICMSLGLIWFTLADSTIAPNFNLTGVVLISLALCADAVIGNVQEKAMKLHNASNSEMVLYSYSIGFVYILLGLTCTSGLGPAVTFCAKNPVRTYGYAFLFSLTGYFGISFVLALIKIFGALIAVTVTTGRKAMTIVLSFIFFAKPFTFQYVWSGLLVFLGIFLNVYSKNMDKIRLPSLYDLINKSVEARKSRTLAQTV.

N-linked (GlcNAc...) asparagine glycans are attached at residues N12 and N71. 6 helical membrane-spanning segments follow: residues 78 to 98, 111 to 131, 147 to 167, 170 to 190, 200 to 220, and 223 to 243; these read LTQF…YGYL, YGWY…LIEL, MIIA…LGYL, PTQV…GVFI, VSAA…DSTI, and NFNL…AVIG. N-linked (GlcNAc...) asparagine glycosylation is present at N254. The next 4 membrane-spanning stretches (helical) occupy residues 267-287, 298-317, 324-346, and 349-369; these read IGFV…PAVT, GYAF…VLAL, LIAV…IFFA, and FTFQ…LNVY.

The protein belongs to the nucleotide-sugar transporter family. SLC35B subfamily.

Its subcellular location is the golgi apparatus membrane. The catalysed reaction is 3'-phosphoadenylyl sulfate(in) + adenosine 3',5'-bisphosphate(out) = 3'-phosphoadenylyl sulfate(out) + adenosine 3',5'-bisphosphate(in). In terms of biological role, probably functions as a 3'-phosphoadenylyl sulfate:adenosine 3',5'-bisphosphate antiporter at the Golgi membranes. Mediates the transport from the cytosol into the lumen of the Golgi of 3'-phosphoadenylyl sulfate/adenosine 3'-phospho 5'-phosphosulfate (PAPS), a universal sulfuryl donor for sulfation events that take place in that compartment. The sequence is that of Adenosine 3'-phospho 5'-phosphosulfate transporter 2 from Pongo abelii (Sumatran orangutan).